Reading from the N-terminus, the 229-residue chain is Ras-related protein Rab-33B (229 aa).

Positions 43, 44, 45, 46, 47, 48, 62, and 65 each coordinate GTP. Thr-47 serves as a coordination point for Mg(2+). A Switch 1 motif is present at residues 56–68 (GRFPDRTEATIGV). Residues Thr-65 and Asp-88 each contribute to the Mg(2+) site. The Switch 2 motif lies at 89–108 (TAGQERFRKSMVQHYYRNVH). GTP contacts are provided by Gly-91, Asn-148, Lys-149, Asp-151, Ala-179, and Lys-180. S-geranylgeranyl cysteine attachment occurs at residues Cys-227 and Cys-229. The residue at position 229 (Cys-229) is a Cysteine methyl ester.

The protein belongs to the small GTPase superfamily. Rab family. In terms of assembly, interacts (GTP- and GDP-bound forms) with ATG16L1; the complex consists of a tetramer where two RAB33B molecules bind independently one molecule of the ATG16L1 homodimer; the interaction promotes ATG12-ATG5-ATG16L1 complex recruitment to phagophores. Interacts with ATG16L2; however interaction is approximately hundred times lower than for ATG16L1. Interacts with RIC1 (via C-terminus domain); the interaction is direct with a preference for RAB33B-GTP. Interacts with RGP1. The cofactor is Mg(2+). In terms of processing, prenylated.

The protein resides in the golgi apparatus membrane. Its subcellular location is the golgi apparatus. It localises to the cis-Golgi network. The protein localises to the preautophagosomal structure membrane. It carries out the reaction GTP + H2O = GDP + phosphate + H(+). Regulated by guanine nucleotide exchange factors (GEFs) which promote the exchange of bound GDP for free GTP. Regulated by GTPase activating proteins (GAPs) such as SGSM2 which increase the GTP hydrolysis activity. Inhibited by GDP dissociation inhibitors (GDIs). Functionally, the small GTPases Rab are key regulators of intracellular membrane trafficking, from the formation of transport vesicles to their fusion with membranes. Rabs cycle between an inactive GDP-bound form and an active GTP-bound form that is able to recruit to membranes different sets of downstream effectors directly responsible for vesicle formation, movement, tethering and fusion. RAB33B acts, in coordination with RAB6A, to regulate intra-Golgi retrograde trafficking. Participates in autophagosome formation by recruiting the ATG12-ATG5-ATG16L1 complex to phagophores, probably in a nucleotide-independent manner. The polypeptide is Ras-related protein Rab-33B (Homo sapiens (Human)).